The following is a 614-amino-acid chain: 1-deoxy-D-xylulose-5-phosphate synthase (614 aa).

Thiamine diphosphate is bound by residues His-74 and 115–117 (AHS). Mg(2+) is bound at residue Asp-146. Residues 147–148 (GA), Asn-175, Tyr-282, and Glu-363 contribute to the thiamine diphosphate site. Asn-175 provides a ligand contact to Mg(2+).

This sequence belongs to the transketolase family. DXPS subfamily. Homodimer. The cofactor is Mg(2+). It depends on thiamine diphosphate as a cofactor.

It carries out the reaction D-glyceraldehyde 3-phosphate + pyruvate + H(+) = 1-deoxy-D-xylulose 5-phosphate + CO2. It participates in metabolic intermediate biosynthesis; 1-deoxy-D-xylulose 5-phosphate biosynthesis; 1-deoxy-D-xylulose 5-phosphate from D-glyceraldehyde 3-phosphate and pyruvate: step 1/1. In terms of biological role, catalyzes the acyloin condensation reaction between C atoms 2 and 3 of pyruvate and glyceraldehyde 3-phosphate to yield 1-deoxy-D-xylulose-5-phosphate (DXP). This is 1-deoxy-D-xylulose-5-phosphate synthase from Nitrosomonas eutropha (strain DSM 101675 / C91 / Nm57).